A 222-amino-acid chain; its full sequence is Type II restriction enzyme AbrI (222 aa).

Disordered stretches follow at residues 21 to 45 (GNRE…RRDR) and 161 to 222 (NQRR…SPRI). The segment covering 22–42 (NREKARQKQQESGKPDQGERR) has biased composition (basic and acidic residues). Residues 188–202 (SSASGSSRSSFTPRP) show a composition bias toward low complexity.

Belongs to the XhoI type II restriction endonuclease family.

It catalyses the reaction Endonucleolytic cleavage of DNA to give specific double-stranded fragments with terminal 5'-phosphates.. Its function is as follows. A P subtype restriction enzyme that recognizes the double-stranded sequence 5'-CTCGAG-3' and cleaves after C-1. In Azospirillum brasilense, this protein is Type II restriction enzyme AbrI (abrIR).